Consider the following 287-residue polypeptide: Putative ankyrin repeat protein R791 (287 aa).

7 ANK repeats span residues 40–71, 76–105, 107–134, 135–164, 165–194, 196–224, and 225–254; these read HNFN…PLVF, NVHD…NIET, NDDV…IDNK, TIFE…DIKA, KDNF…TIDI, DDTY…DYRT, and VDDL…DIEA.

This chain is Putative ankyrin repeat protein R791, found in Acanthamoeba polyphaga (Amoeba).